Here is a 124-residue protein sequence, read N- to C-terminus: Translation initiation factor 5A (124 aa).

At Lys36 the chain carries Hypusine.

This sequence belongs to the eIF-5A family.

It is found in the cytoplasm. Functions by promoting the formation of the first peptide bond. The protein is Translation initiation factor 5A of Haloquadratum walsbyi (strain DSM 16790 / HBSQ001).